Consider the following 339-residue polypeptide: AT-hook motif nuclear-localized protein 26 (339 aa).

Residues 1 to 12 (MDPVQSHGSQSS) show a composition bias toward polar residues. Disordered stretches follow at residues 1-132 (MDPV…NKPK) and 273-339 (MQTP…RPPY). Low complexity predominate over residues 24–45 (LHLQQQQQHQQQHQQQQQQQFF). The span at 82-93 (NMDNIANTNSGS) shows a compositional bias: polar residues. Over residues 102 to 113 (GGEGGSGGGGSG) the composition is skewed to gly residues. Residues 118 to 130 (RRPRGRPAGSKNK) constitute a DNA-binding region (a.T hook). Residues 142-279 (ANALRTHVME…EDEMQTPVQG (138 aa)) enclose the PPC domain. Positions 278 to 291 (QGGGGGGGGGGGMG) are enriched in gly residues. Residues 292–310 (SPPMMGQQQAMAAMAAAQG) are compositionally biased toward low complexity.

It localises to the nucleus. Transcription factor that specifically binds AT-rich DNA sequences related to the nuclear matrix attachment regions (MARs). The chain is AT-hook motif nuclear-localized protein 26 from Arabidopsis thaliana (Mouse-ear cress).